The following is a 254-amino-acid chain: CRISPR-associated endoribonuclease Cas6 1 (254 aa).

Catalysis depends on Tyr32, which acts as the Proton acceptor. Catalysis depends on His47, which acts as the Proton donor.

The protein belongs to the CRISPR-associated protein Cas6/Cse3/CasE family.

In terms of biological role, CRISPR (clustered regularly interspaced short palindromic repeat) is an adaptive immune system that provides protection against mobile genetic elements (viruses, transposable elements and conjugative plasmids). CRISPR clusters contain sequences complementary to antecedent mobile elements and target invading nucleic acids. CRISPR clusters are transcribed and processed into CRISPR RNA (crRNA). This protein processes pre-crRNA into individual crRNA units. This chain is CRISPR-associated endoribonuclease Cas6 1 (cas6a), found in Methanocaldococcus jannaschii (strain ATCC 43067 / DSM 2661 / JAL-1 / JCM 10045 / NBRC 100440) (Methanococcus jannaschii).